The chain runs to 238 residues: 1-(5-phosphoribosyl)-5-[(5-phosphoribosylamino)methylideneamino] imidazole-4-carboxamide isomerase (238 aa).

The active-site Proton acceptor is D8. The active-site Proton donor is the D130.

The protein belongs to the HisA/HisF family.

Its subcellular location is the cytoplasm. The enzyme catalyses 1-(5-phospho-beta-D-ribosyl)-5-[(5-phospho-beta-D-ribosylamino)methylideneamino]imidazole-4-carboxamide = 5-[(5-phospho-1-deoxy-D-ribulos-1-ylimino)methylamino]-1-(5-phospho-beta-D-ribosyl)imidazole-4-carboxamide. The protein operates within amino-acid biosynthesis; L-histidine biosynthesis; L-histidine from 5-phospho-alpha-D-ribose 1-diphosphate: step 4/9. The protein is 1-(5-phosphoribosyl)-5-[(5-phosphoribosylamino)methylideneamino] imidazole-4-carboxamide isomerase of Methanococcus maripaludis (strain C7 / ATCC BAA-1331).